We begin with the raw amino-acid sequence, 278 residues long: OX-2 membrane glycoprotein (278 aa).

Residues 1-30 (MERLVIRMPFSHLSTYSLVWVMAAVVLCTA) form the signal peptide. Residues 31–141 (QVQVVTQDER…SGTACLTVYV (111 aa)) enclose the Ig-like V-type domain. The Extracellular segment spans residues 31-232 (QVQVVTQDER…TDFKQTVNKG (202 aa)). 2 disulfide bridges follow: cysteine 51–cysteine 121 and cysteine 118–cysteine 136. 3 N-linked (GlcNAc...) asparagine glycosylation sites follow: asparagine 95, asparagine 103, and asparagine 110. The Ig-like C2-type domain maps to 142 to 232 (QPIVSLHYKF…TDFKQTVNKG (91 aa)). 3 N-linked (GlcNAc...) asparagine glycosylation sites follow: asparagine 157, asparagine 181, and asparagine 190. A disulfide bridge connects residues cysteine 160 and cysteine 214. The chain crosses the membrane as a helical span at residues 233–259 (YWFSVPLLLSIVSLVILLVLISILLYW). Over 260–278 (KRHRNQDRGELSQGVQKMT) the chain is Cytoplasmic.

CD200 and CD200R1 interact via their respective N-terminal Ig-like domains.

It is found in the cell membrane. Functionally, costimulates T-cell proliferation. May regulate myeloid cell activity in a variety of tissues. This Homo sapiens (Human) protein is OX-2 membrane glycoprotein (CD200).